A 40-amino-acid polypeptide reads, in one-letter code: Photosystem II reaction center protein J (40 aa).

A helical membrane pass occupies residues 8–28 (IPLWLIGTVTGIIVIGLLGVF).

The protein belongs to the PsbJ family. As to quaternary structure, PSII is composed of 1 copy each of membrane proteins PsbA, PsbB, PsbC, PsbD, PsbE, PsbF, PsbH, PsbI, PsbJ, PsbK, PsbL, PsbM, PsbT, PsbX, PsbY, PsbZ, Psb30/Ycf12, at least 3 peripheral proteins of the oxygen-evolving complex and a large number of cofactors. It forms dimeric complexes.

The protein localises to the plastid. It localises to the chloroplast thylakoid membrane. Its function is as follows. One of the components of the core complex of photosystem II (PSII). PSII is a light-driven water:plastoquinone oxidoreductase that uses light energy to abstract electrons from H(2)O, generating O(2) and a proton gradient subsequently used for ATP formation. It consists of a core antenna complex that captures photons, and an electron transfer chain that converts photonic excitation into a charge separation. This is Photosystem II reaction center protein J from Pinus thunbergii (Japanese black pine).